We begin with the raw amino-acid sequence, 146 residues long: Protein LDOC1 (146 aa).

This sequence belongs to the LDOC1 family. In terms of assembly, interacts with NOD2. In terms of tissue distribution, ubiquitously expressed with high levels in brain ant thyroid and low expression in placenta, liver and leukocytes. Expressed as well in six of the seven human breast cancer cell lines examined.

Its subcellular location is the nucleus. Functionally, may have an important role in the development and/or progression of some cancers. The chain is Protein LDOC1 (LDOC1) from Homo sapiens (Human).